The chain runs to 228 residues: NAD(P)H-hydrate epimerase (228 aa).

The region spanning 10–214 (AIDIDQELFN…DLERKYDLKI (205 aa)) is the YjeF N-terminal domain. 58-62 (NNGGD) contributes to the (6S)-NADPHX binding site. Asparagine 59 and aspartate 123 together coordinate K(+). Residues 127-133 (GFSFKPP) and aspartate 156 each bind (6S)-NADPHX. Serine 159 serves as a coordination point for K(+).

Belongs to the NnrE/AIBP family. The cofactor is K(+).

It carries out the reaction (6R)-NADHX = (6S)-NADHX. The catalysed reaction is (6R)-NADPHX = (6S)-NADPHX. Catalyzes the epimerization of the S- and R-forms of NAD(P)HX, a damaged form of NAD(P)H that is a result of enzymatic or heat-dependent hydration. This is a prerequisite for the S-specific NAD(P)H-hydrate dehydratase to allow the repair of both epimers of NAD(P)HX. This Pediculus humanus subsp. corporis (Body louse) protein is NAD(P)H-hydrate epimerase.